The sequence spans 340 residues: Organic solute transporter subunit alpha (340 aa).

Over 1-48 (MEPGRTHIKLDPRYTAELLELLETNYSISPACFSHPPTAAQLLRALGP) the chain is Extracellular. Asparagine 25 is a glycosylation site (N-linked (GlcNAc...) asparagine). Residues 49–69 (VDIALTIILTFLTTGSVAIFL) form a helical membrane-spanning segment. Residues 70-87 (EDAVYLYKNTLCPIKKRT) lie on the Cytoplasmic side of the membrane. Residues 88-108 (LIWSSSAPTVVSVFCCFGLWI) traverse the membrane as a helical segment. Residues 109–114 (PRALTL) are Extracellular-facing. The helical transmembrane segment at 115 to 135 (VEMAITSFYAVCFYLLMMVMV) threads the bilayer. The Cytoplasmic portion of the chain corresponds to 136–181 (EGFGGKKAVLRTLKDTPMRVHTGPCCCCCPCCPPLILTRKKLQLLL). A helical transmembrane segment spans residues 182–202 (LGPFQYAFFKITLSIVGLFLI). The Extracellular portion of the chain corresponds to 203–219 (PDGIYDPGEISEKSAAL). Residues 220-240 (WINNLLAVSTLLALWSLAILF) traverse the membrane as a helical segment. The Cytoplasmic segment spans residues 241–255 (RQAKMHLGEQNMGSK). A helical transmembrane segment spans residues 256 to 276 (FALFQVLVILTALQPAIFSIL). The Extracellular portion of the chain corresponds to 277–297 (ANSGQIACSPPYSSKIRSQVM). A helical membrane pass occupies residues 298–317 (NCHMLILETFLMTVLTRMYY). Over 318-340 (RRKDDKVGYEACSLPDLDSALKA) the chain is Cytoplasmic. A Phosphoserine modification is found at serine 330.

This sequence belongs to the OST-alpha family. In terms of assembly, interacts with SLC51B. The Ost-alpha/Ost-beta complex is a heterodimer composed of alpha (SLC51A) and beta (SLC51B) subunit. N-glycosylated. In terms of tissue distribution, present at high levels in ileum. In ileum, it is restricted to the apical domain on the mature villus enterocytes with little detectable expression in the goblet cells or crypt enterocytes (at protein level). Expressed in kidney but not in heart, brain, liver, spleen, embryo, lung, thymus, ovary nor testis.

It is found in the cell membrane. The protein resides in the endoplasmic reticulum membrane. It catalyses the reaction taurocholate(out) = taurocholate(in). The enzyme catalyses tauroursodeoxycholate(out) = tauroursodeoxycholate(in). The catalysed reaction is glycoursodeoxycholate(out) = glycoursodeoxycholate(in). It carries out the reaction glycocholate(out) = glycocholate(in). It catalyses the reaction taurochenodeoxycholate(out) = taurochenodeoxycholate(in). The enzyme catalyses glycochenodeoxycholate(out) = glycochenodeoxycholate(in). The catalysed reaction is taurodeoxycholate(out) = taurodeoxycholate(in). It carries out the reaction glycodeoxycholate(out) = glycodeoxycholate(in). It catalyses the reaction prostaglandin E2(out) = prostaglandin E2(in). The enzyme catalyses estrone 3-sulfate(out) = estrone 3-sulfate(in). The catalysed reaction is dehydroepiandrosterone 3-sulfate(out) = dehydroepiandrosterone 3-sulfate(in). In terms of biological role, essential component of the Ost-alpha/Ost-beta complex, a heterodimer that acts as the intestinal basolateral transporter responsible for bile acid export from enterocytes into portal blood. Efficiently transports the major species of bile acids (taurocholate). Taurine conjugates are transported more efficiently across the basolateral membrane than glycine-conjugated bile acids. Can also transport steroids such as estrone 3-sulfate and dehydroepiandrosterone 3-sulfate, therefore playing a role in the enterohepatic circulation of sterols. Able to transport eicosanoids such as prostaglandin E2. The sequence is that of Organic solute transporter subunit alpha (Slc51a) from Mus musculus (Mouse).